The following is a 64-amino-acid chain: Large ribosomal subunit protein bL33 (64 aa).

This sequence belongs to the bacterial ribosomal protein bL33 family.

This Parasynechococcus marenigrum (strain WH8102) protein is Large ribosomal subunit protein bL33.